The chain runs to 132 residues: Anti-sigma-E factor RseA (132 aa).

Thr36 bears the Phosphothreonine; by PknB mark. Positions 63, 67, and 70 each coordinate Zn(2+). The disordered stretch occupies residues 106–132 (RTPEVTPDVSEQAKFADDPTRGRRKRR).

Belongs to the zinc-associated anti-sigma factor (ZAS) superfamily. As to quaternary structure, interacts with ECF RNA polymerase sigma factor SigE, interaction is abrogated by treatment of cells with H(2)O(2), detergent or vancomycin (the latter 2 cause surface stress). This probably inhibits the interaction of SigE with the RNA polymerase catalytic core. Zn(2+) serves as cofactor. Phosphorylated by PknB on Thr-36; can be dephosphorylated (at least in vitro) by PstP. Phosphorylation is the signal for subsequent degradation by the ClpC1-ClpP2 complex. Post-translationally, degraded following vancomycin treatment (surface stress) by a ClpC1-ClpP2 complex.

The protein resides in the cytoplasm. Functionally, an anti-sigma factor for extracytoplasmic function (ECF) sigma factor SigE. ECF sigma factors are held in an inactive form by an anti-sigma factor. This is Anti-sigma-E factor RseA (rseA) from Mycolicibacterium smegmatis (strain ATCC 700084 / mc(2)155) (Mycobacterium smegmatis).